The following is a 131-amino-acid chain: Proline-rich protein 3 (131 aa).

Residues 1–77 (LHRGPPGSRG…KEQRNPRRLK (77 aa)) are disordered. Over residues 12–25 (MIPPLLSLPPPPRG) the composition is skewed to pro residues. The span at 28 to 44 (PLRGGLGPRSGPYGRGW) shows a compositional bias: gly residues. A C3H1-type zinc finger spans residues 98-126 (KSDRPVCRHFAKKGHCRYEDLCAFYHPGA).

This chain is Proline-rich protein 3 (PRR3), found in Sus scrofa (Pig).